The chain runs to 692 residues: A-type ATP synthase subunit I (692 aa).

Helical transmembrane passes span 389-409, 422-442, 494-514, 531-551, 553-573, 602-622, and 624-644; these read GIML…LFIW, LGYI…ITGG, ILVF…FVGF, GVWI…FAGA, TMIA…ASMY, ARLL…NIMA, and LVGE…LLVG.

This sequence belongs to the V-ATPase 116 kDa subunit family. The A-type ATPase is composed of subunits A(3), B(3), C, D, E(1 or 2), F, H(2), I and K(x).

It localises to the cell membrane. In terms of biological role, component of the A-type ATP synthase that produces ATP from ADP in the presence of a proton gradient across the membrane. This chain is A-type ATP synthase subunit I, found in Methanocaldococcus jannaschii (strain ATCC 43067 / DSM 2661 / JAL-1 / JCM 10045 / NBRC 100440) (Methanococcus jannaschii).